Reading from the N-terminus, the 218-residue chain is Hypoxanthine-guanine phosphoribosyltransferase (218 aa).

A2 carries the N-acetylalanine modification. K69 contributes to the GMP binding site. At K103 the chain carries N6-acetyllysine. K115 is covalently cross-linked (Glycyl lysine isopeptide (Lys-Gly) (interchain with G-Cter in SUMO1); alternate). A Glycyl lysine isopeptide (Lys-Gly) (interchain with G-Cter in SUMO2); alternate cross-link involves residue K115. Residues 134-142 (EDIIDTGKT), K166, 186-188 (KFV), and D194 each bind GMP. The Proton acceptor role is filled by D138. T142 is subject to Phosphothreonine. A Mg(2+)-binding site is contributed by D194.

Belongs to the purine/pyrimidine phosphoribosyltransferase family. Homotetramer. The cofactor is Mg(2+).

The protein localises to the cytoplasm. The enzyme catalyses IMP + diphosphate = hypoxanthine + 5-phospho-alpha-D-ribose 1-diphosphate. It catalyses the reaction GMP + diphosphate = guanine + 5-phospho-alpha-D-ribose 1-diphosphate. The protein operates within purine metabolism; IMP biosynthesis via salvage pathway; IMP from hypoxanthine: step 1/1. Functionally, converts guanine to guanosine monophosphate, and hypoxanthine to inosine monophosphate. Transfers the 5-phosphoribosyl group from 5-phosphoribosylpyrophosphate onto the purine. Plays a central role in the generation of purine nucleotides through the purine salvage pathway. The polypeptide is Hypoxanthine-guanine phosphoribosyltransferase (HPRT1) (Bos taurus (Bovine)).